The following is a 509-amino-acid chain: Maturase K (509 aa).

The protein belongs to the intron maturase 2 family. MatK subfamily.

The protein localises to the plastid. Its subcellular location is the chloroplast. Usually encoded in the trnK tRNA gene intron. Probably assists in splicing its own and other chloroplast group II introns. The protein is Maturase K of Nicotiana alata (Winged tobacco).